The sequence spans 207 residues: Small ribosomal subunit protein uS4c (207 aa).

The region spanning 92–153 (MRLDNILFRL…PKTYQSILSK (62 aa)) is the S4 RNA-binding domain.

It belongs to the universal ribosomal protein uS4 family. In terms of assembly, part of the 30S ribosomal subunit. Contacts protein S5. The interaction surface between S4 and S5 is involved in control of translational fidelity.

It is found in the plastid. It localises to the chloroplast. In terms of biological role, one of the primary rRNA binding proteins, it binds directly to 16S rRNA where it nucleates assembly of the body of the 30S subunit. With S5 and S12 plays an important role in translational accuracy. This Equisetum hyemale (Dutch rush) protein is Small ribosomal subunit protein uS4c (rps4).